Here is a 442-residue protein sequence, read N- to C-terminus: UDP-N-acetylmuramate--L-alanine ligase (442 aa).

Residue 109 to 115 coordinates ATP; that stretch reads GAHGKTS.

Belongs to the MurCDEF family.

It is found in the cytoplasm. The enzyme catalyses UDP-N-acetyl-alpha-D-muramate + L-alanine + ATP = UDP-N-acetyl-alpha-D-muramoyl-L-alanine + ADP + phosphate + H(+). The protein operates within cell wall biogenesis; peptidoglycan biosynthesis. Its function is as follows. Cell wall formation. The sequence is that of UDP-N-acetylmuramate--L-alanine ligase from Streptococcus pyogenes serotype M28 (strain MGAS6180).